Reading from the N-terminus, the 723-residue chain is FACT complex subunit Ssrp1 (723 aa).

At serine 443 the chain carries Phosphoserine. Disordered regions lie at residues 459-564 (EARE…AFML) and 586-723 (AKKG…EASD). Composition is skewed to acidic residues over residues 464 to 478 (EEDDDDGDSDEESTD) and 486 to 507 (NESDVAEEYDSNVESDSDDDSD). Basic residues predominate over residues 531–557 (KKEKKHKEKERTKKPSKKKKDSGKPKR). Positions 555–621 (PKRATTAFML…RYHDEMRNYK (67 aa)) form a DNA-binding region, HMG box. Residues 586–621 (AKKGGEMWKELKDKSKWEDAAAKDKQRYHDEMRNYK) are compositionally biased toward basic and acidic residues. A Phosphoserine modification is found at serine 628. The segment covering 644–656 (PSPSKKANTSGSG) has biased composition (polar residues). Serine 664 and serine 668 each carry phosphoserine. The segment covering 664-676 (SDDDSTSSDDEKD) has biased composition (acidic residues). Threonine 669 carries the post-translational modification Phosphothreonine. Phosphoserine is present on residues serine 670 and serine 671. Residues 677-692 (NEPAKKKSKPPSDGDA) are compositionally biased toward basic and acidic residues. Residues 702–723 (EPEESEEDSNASDEDEEDEASD) show a composition bias toward acidic residues.

It belongs to the SSRP1 family. In terms of assembly, component of the FACT complex, a stable heterodimer of dre4/spt16 and Ssrp. Interacts with CHD1 and TRL/GAGA. Expressed at highest levels in nurse cells of the ovary.

It is found in the nucleus. The protein resides in the chromosome. The protein localises to the nucleolus. Component of the FACT complex, a general chromatin factor that acts to reorganize nucleosomes. The FACT complex is involved in multiple processes that require DNA as a template such as mRNA elongation, DNA replication and DNA repair. During transcription elongation the FACT complex acts as a histone chaperone that both destabilizes and restores nucleosomal structure. It facilitates the passage of RNA polymerase II and transcription by promoting the dissociation of one histone H2A-H2B dimer from the nucleosome, then subsequently promotes the reestablishment of the nucleosome following the passage of RNA polymerase II. Binds specifically to single-stranded DNA and RNA with highest affinity for nucleotides G and U. The FACT complex is required for expression of Hox genes. This Drosophila melanogaster (Fruit fly) protein is FACT complex subunit Ssrp1 (Ssrp).